A 151-amino-acid polypeptide reads, in one-letter code: MHRTSNGSHATGGNLPDVASHYPVAYEQTLDGTVGFVIDEMTPERATASVEVTDTLRQRWGLVHGGAYCALAEMLATEATVAVVHEKGMMAVGQSNHTSFFRPVKEGHVRAEAVRIHAGSTTWFWDVSLRDDAGRLCAVSSMSIAVRPRRD.

The active site involves E73. Residue 100–102 (FFR) participates in substrate binding.

This sequence belongs to the thioesterase PaaI family. As to quaternary structure, homotetramer.

It catalyses the reaction 4-hydroxybenzoyl-CoA + H2O = 4-hydroxybenzoate + CoA + H(+). The protein operates within xenobiotic degradation; 4-chlorobenzoate degradation; 4-hydroxybenzoate from 4-chlorobenzoate: step 3/3. The chain is 4-hydroxybenzoyl-CoA thioesterase from Arthrobacter globiformis.